Consider the following 72-residue polypeptide: Translation initiation factor IF-1 (72 aa).

The region spanning 1–72 is the S1-like domain; sequence MAKEGAIEVE…TRGRIVYRYK (72 aa).

The protein belongs to the IF-1 family. In terms of assembly, component of the 30S ribosomal translation pre-initiation complex which assembles on the 30S ribosome in the order IF-2 and IF-3, IF-1 and N-formylmethionyl-tRNA(fMet); mRNA recruitment can occur at any time during PIC assembly.

The protein resides in the cytoplasm. In terms of biological role, one of the essential components for the initiation of protein synthesis. Stabilizes the binding of IF-2 and IF-3 on the 30S subunit to which N-formylmethionyl-tRNA(fMet) subsequently binds. Helps modulate mRNA selection, yielding the 30S pre-initiation complex (PIC). Upon addition of the 50S ribosomal subunit IF-1, IF-2 and IF-3 are released leaving the mature 70S translation initiation complex. This is Translation initiation factor IF-1 from Corynebacterium glutamicum (strain R).